Reading from the N-terminus, the 71-residue chain is DNA-directed RNA polymerase subunit epsilon (71 aa).

This sequence belongs to the RNA polymerase subunit epsilon family. As to quaternary structure, RNAP is composed of a core of 2 alpha, a beta and a beta' subunit. The core is associated with a delta subunit, and at least one of epsilon or omega. When a sigma factor is associated with the core the holoenzyme is formed, which can initiate transcription.

The enzyme catalyses RNA(n) + a ribonucleoside 5'-triphosphate = RNA(n+1) + diphosphate. Functionally, a non-essential component of RNA polymerase (RNAP). This is DNA-directed RNA polymerase subunit epsilon from Staphylococcus saprophyticus subsp. saprophyticus (strain ATCC 15305 / DSM 20229 / NCIMB 8711 / NCTC 7292 / S-41).